The sequence spans 695 residues: WD repeat-containing protein 93 (695 aa).

The segment at 1–35 (MSSFKGNQAQKRRLSVFPKGPLEIPSPTEADWPKD) is disordered. One copy of the WD repeat lies at 421–460 (PCAAPIVMSQISSFSSYLALVCEDGVLILWDLAEGFLFGV).

Testis-specific. Expressed in spermatogonia, spermatocytes and spermatids.

This chain is WD repeat-containing protein 93 (Wdr93), found in Mus musculus (Mouse).